We begin with the raw amino-acid sequence, 464 residues long: Dolichyl-diphosphooligosaccharide--protein glycosyltransferase subunit 1B (464 aa).

Positions 1-24 (MAARIGIFSVFVAVLLSISAFSSA) are cleaved as a signal peptide. Residues 25–436 (QDLQIVNAER…TFKPIYMLAE (412 aa)) are Lumenal-facing. N-linked (GlcNAc...) asparagine glycans are attached at residues Asn-106 and Asn-298. A Glycyl lysine isopeptide (Lys-Gly) (interchain with G-Cter in ubiquitin) cross-link involves residue Lys-310. N-linked (GlcNAc...) asparagine glycosylation occurs at Asn-352. A helical membrane pass occupies residues 437 to 457 (PFMLVSAFFLVFVASLAYVHI). Topologically, residues 458 to 464 (DLNIVRK) are cytoplasmic.

This sequence belongs to the OST1 family. In terms of assembly, component of the oligosaccharyltransferase (OST) complex.

It is found in the endoplasmic reticulum membrane. Its pathway is protein modification; protein glycosylation. Functionally, subunit of the oligosaccharyl transferase (OST) complex that catalyzes the initial transfer of a defined glycan (Glc(3)Man(9)GlcNAc(2) in eukaryotes) from the lipid carrier dolichol-pyrophosphate to an asparagine residue within an Asn-X-Ser/Thr consensus motif in nascent polypeptide chains, the first step in protein N-glycosylation. N-glycosylation occurs cotranslationally and the complex associates with the Sec61 complex at the channel-forming translocon complex that mediates protein translocation across the endoplasmic reticulum (ER). All subunits are required for a maximal enzyme activity. The protein is Dolichyl-diphosphooligosaccharide--protein glycosyltransferase subunit 1B (OST1B) of Arabidopsis thaliana (Mouse-ear cress).